Here is a 263-residue protein sequence, read N- to C-terminus: Norsolorinic acid ketoreductase stcE (263 aa).

NADP(+) is bound by residues leucine 29, aspartate 76, asparagine 105, tyrosine 177, lysine 181, isoleucine 208, and serine 210. The active-site Proton donor is tyrosine 177. Lysine 181 serves as the catalytic Lowers pKa of active site Tyr.

The protein belongs to the short-chain dehydrogenases/reductases (SDR) family.

The enzyme catalyses (1'S)-averantin + NADP(+) = norsolorinic acid + NADPH + H(+). The protein operates within mycotoxin biosynthesis; sterigmatocystin biosynthesis. Its function is as follows. Short chain dehydrogenase; part of the gene cluster that mediates the biosynthesis of sterigmatocystin (ST), a polyketide-derived furanocoumarin which is part of the most toxic and carcinogenic compounds among the known mycotoxins. The first step in the biosynthesis of sterigmatocystin is the production of hexanoate by the fatty acid synthase (FAS) units stcJ and stcK. The polyketide backbone is assembled by the non-reducing polyketide synthase stcA by condensation of the starter hexanoyl-CoA and 7 malonyl-CoA extender units followed by cyclization and release of norsolorinic acid. Norsolorinic acid is the first stable intermediate in the biosynthesis of sterigmatocystin and is converted into averantin (AVN) by the ketoreductase stcE which reduces the hexanoate ketone to an alcohol. Averantin is then oxidized into 5'-hydroxyaverantin (HAVN) by the cytochrome P450 monooxygenase stcF. 5'-hydroxyaverantin is further converted to 5'-oxyaverantin (OAVN) by the 5'-hydroxyaverantin dehydrogenase stcG. The next step is the conversion of OAVN into averufin (AVF) which is catalyzed by a yet to be identified enzyme. The cytochrome P450 monooxygenase stcB and the flavin-binding monooxygenase stcW are both required for the conversion of averufin to 1-hydroxyversicolorone. The esterase stcI probably catalyzes the formation of versiconal hemiacetal acetate from 1-hydroxyversicolorone. The oxydoreductase stcN then probably catalyzes the biosynthetic step from versiconal to versicolorin B (VERB). The next step is performed by the versicolorin B desaturase stcL to produce versicolorin A (VERA). The ketoreductase stcU and the cytochrome P450 monooxygenase stcS are involved in the conversion of versicolorin A to demethylsterigmatocystin. The Baeyer-Villiger oxidas stcQ and the reductase stcR might be involved in the biosynthetic step from versicolorin A to demethylsterigmatocystin. The final step in the biosynthesis of sterigmatocystin is the methylation of demethylsterigmatocystin catalyzed by the methyltransferase stcP. The protein is Norsolorinic acid ketoreductase stcE of Emericella nidulans (strain FGSC A4 / ATCC 38163 / CBS 112.46 / NRRL 194 / M139) (Aspergillus nidulans).